We begin with the raw amino-acid sequence, 338 residues long: 1-aminocyclopropane-1-carboxylate deaminase (338 aa).

An N6-(pyridoxal phosphate)lysine modification is found at K51. S78 acts as the Nucleophile in catalysis.

The protein belongs to the ACC deaminase/D-cysteine desulfhydrase family. As to quaternary structure, homotrimer. The cofactor is pyridoxal 5'-phosphate.

It carries out the reaction 1-aminocyclopropane-1-carboxylate + H2O = 2-oxobutanoate + NH4(+). Functionally, catalyzes a cyclopropane ring-opening reaction, the irreversible conversion of 1-aminocyclopropane-1-carboxylate (ACC) to ammonia and alpha-ketobutyrate. Allows growth on ACC as a nitrogen source. This chain is 1-aminocyclopropane-1-carboxylate deaminase, found in Paraburkholderia xenovorans (strain LB400).